An 87-amino-acid polypeptide reads, in one-letter code: Small ribosomal subunit protein bS20 (87 aa).

Belongs to the bacterial ribosomal protein bS20 family.

Its function is as follows. Binds directly to 16S ribosomal RNA. The chain is Small ribosomal subunit protein bS20 from Rickettsia bellii (strain OSU 85-389).